The following is a 497-amino-acid chain: 4,4'-diapolycopene oxygenase (497 aa).

It belongs to the carotenoid/retinoid oxidoreductase family. The cofactor is FAD.

The catalysed reaction is all-trans-4,4'-diapolycopene + 4 AH2 + 4 O2 = all-trans-4,4'-diapolycopene-4,4'-dial + 4 A + 6 H2O. The enzyme catalyses all-trans-4,4'-diaponeurosporene + 2 AH2 + 2 O2 = 4,4'-diaponeurosporenal + 2 A + 3 H2O. The protein operates within carotenoid biosynthesis. Functionally, involved in the biosynthesis of C30 carotenoids. Catalyzes the oxidation of the terminal methyl side groups of 4,4'-diapolycopene to yield 4,4'-diapolycopen-4,4'-dial via the aldehyde intermediate 4,4'-diapolycopen-al. Also able to catalyze the oxidation of the terminal methyl side group of 4,4'-diaponeurosporene to form 4,4'-diaponeurosporen-4-al. It has moderate to low activity on the C40 substrates neurosporene and lycopene, and has no detectable activity on zeta-carotene or beta-carotene. This is 4,4'-diapolycopene oxygenase from Methylomonas sp.